The following is a 509-amino-acid chain: MKKPIIQLLLIFTIVSIVPFLLNTSYISLYTFVGVLWSITIVGISFVIFIENRSPQSTLAWFLVLALLPVVGVLLYSIFGRSRWRRKKHLHRSEEQRKLFREILEGRRLELSLKVPLSERSVHLTEVVQKFGGGPAADRTTTKLLTNGDQTFSEILQAIEQAKHHIHIQYYIYKSDEIGTKVRDALIKKAKDGVIVRFLYDGLGSNTLRRRFLQPMKEAGIEIVEFDPIFSAWLLETVNYRNHRKIVIVDGEIGFTGGLNVGDEYLGRSKKFPVWRDSHLKVEGKALYKLQAIFLEDWLYASSGLNTYSWDPFMNRQYFPGKEISNAEGAVQIVASGPSSDDKSIRNTLLAVMGSAKKSIWIATPYFIPDQETLTLLRLSAISGIDVRILYPGKSDSIISDQASQSYFTPLLKAGASIYSYKDGFMHAKILLVDDKIATIGTANMDVRSFELNYEIISVLYESETVHDIKRDFEDDFKHSTEIKWNAFQKRSIKKRILESFMRLISPLL.

A run of 3 helical transmembrane segments spans residues 4–24 (PIIQ…LLNT), 30–50 (YTFV…VIFI), and 59–79 (LAWF…YSIF). PLD phosphodiesterase domains lie at 238–265 (VNYR…GDEY) and 422–449 (KDGF…DVRS). Catalysis depends on residues histidine 243, lysine 245, aspartate 250, histidine 427, lysine 429, and aspartate 434.

It belongs to the phospholipase D family. Cardiolipin synthase subfamily.

It is found in the cell membrane. It catalyses the reaction 2 a 1,2-diacyl-sn-glycero-3-phospho-(1'-sn-glycerol) = a cardiolipin + glycerol. In terms of biological role, catalyzes the reversible phosphatidyl group transfer from one phosphatidylglycerol molecule to another to form cardiolipin (CL) (diphosphatidylglycerol) and glycerol. The protein is Cardiolipin synthase 1 (cls1) of Bacillus anthracis.